The primary structure comprises 378 residues: SWI/SNF-related matrix-associated actin-dependent regulator of chromatin subfamily B member 1 (378 aa).

Positions 1–106 (MIMALSKTFG…DEKYKAVSIS (106 aa)) are DNA-binding.

Belongs to the SNF5 family. As to quaternary structure, component of the multiprotein chromatin-remodeling complexes SWI/SNF. Component of neural progenitors-specific chromatin remodeling complex (npBAF complex) and the neuron-specific chromatin remodeling complex (nBAF complex). Component of the BAF (SWI/SNF) chromatin remodeling complex. Component of the SWI/SNF-B (PBAF) chromatin remodeling complex. Binds to double-stranded DNA.

The protein localises to the nucleus. Involved in chromatin-remodeling. Core component of the BAF (SWI/SNF) complex. This ATP-dependent chromatin-remodeling complex plays important roles in cell proliferation and differentiation, in cellular antiviral activities and inhibition of tumor formation. Belongs to the neural progenitors-specific chromatin remodeling complex (npBAF complex) and the neuron-specific chromatin remodeling complex (nBAF complex) and may play a role in neural development. The chain is SWI/SNF-related matrix-associated actin-dependent regulator of chromatin subfamily B member 1 (smarcb1) from Xenopus laevis (African clawed frog).